Here is a 128-residue protein sequence, read N- to C-terminus: Azurin (128 aa).

The Plastocyanin-like domain occupies 1–128; that stretch reads AECKVTVDST…AMMKGTVTLK (128 aa). A disulfide bridge connects residues Cys-3 and Cys-26. Cu cation contacts are provided by His-46, Cys-112, His-117, and Met-121.

The protein resides in the periplasm. In terms of biological role, transfers electrons from cytochrome c551 to cytochrome oxidase. This Pseudomonas fluorescens biotype C protein is Azurin.